A 55-amino-acid polypeptide reads, in one-letter code: Large ribosomal subunit protein uL15 (55 aa).

Belongs to the universal ribosomal protein uL15 family. As to quaternary structure, part of the 50S ribosomal subunit.

Binds to the 23S rRNA. The polypeptide is Large ribosomal subunit protein uL15 (rplO) (Lactococcus lactis subsp. cremoris (Streptococcus cremoris)).